Reading from the N-terminus, the 274-residue chain is SPbeta prophage-derived uncharacterized protein YomD (274 aa).

This Bacillus subtilis (strain 168) protein is SPbeta prophage-derived uncharacterized protein YomD (yomD).